We begin with the raw amino-acid sequence, 66 residues long: Large ribosomal subunit protein bL32 (66 aa).

Positions 1–19 are enriched in basic residues; the sequence is MAVPKRKMSRSNTRARRSQ. The interval 1-20 is disordered; it reads MAVPKRKMSRSNTRARRSQW.

Belongs to the bacterial ribosomal protein bL32 family.

The chain is Large ribosomal subunit protein bL32 from Beutenbergia cavernae (strain ATCC BAA-8 / DSM 12333 / CCUG 43141 / JCM 11478 / NBRC 16432 / NCIMB 13614 / HKI 0122).